The primary structure comprises 235 residues: Cell division protein FtsQ (235 aa).

At 1-6 (MERLTR) the chain is on the cytoplasmic side. The chain crosses the membrane as a helical span at residues 7 to 25 (WLLVMMAMLLAASGLVWFY). Residues 26–235 (NSNHLPVKQV…DGLPEKESEE (210 aa)) lie on the Periplasmic side of the membrane. The POTRA domain maps to 30–99 (LPVKQVSLKG…DTVEVVLTER (70 aa)).

It belongs to the FtsQ/DivIB family. FtsQ subfamily. As to quaternary structure, part of a complex composed of FtsB, FtsL and FtsQ.

It is found in the cell inner membrane. Functionally, essential cell division protein. May link together the upstream cell division proteins, which are predominantly cytoplasmic, with the downstream cell division proteins, which are predominantly periplasmic. May control correct divisome assembly. The chain is Cell division protein FtsQ from Neisseria meningitidis serogroup B (strain ATCC BAA-335 / MC58).